A 545-amino-acid chain; its full sequence is MSRKQNQKDSSGFIFDLQSNTVLAQGGAFENMKEKINAVRAIVPNKSNNEIILVLQHFDNCVDKTVQAFMEGSASEVLKEWTVTGKKKNKKKKNKPKPAAEPSNGIPDSSKSVSIQEEQSAPSSEKGGMNGYHVNGAINDTESVDSLSEGLETLSIDARELEDPESAMLDTLDRTGSMLQNGVSDFETKSLTMHSIHNSQQPRNAAKSLSRPTTETQFSNMGMEDVPLATSKKLSSNIEKSVKDLQRCTVSLARYRVVVKEEMDASIKKMKQAFAELESCLMDREVALLAEMDKVKAEAMEILLSRQKKAELLKKMTHVAVQMSEQQLVELRADIKHFVSERKYDEDLGRVARFTCDVETLKKSIDSFGQVSHPKNSYSTRSRCSSVTSVSLSSPSDASAASSSTCASPPSLTSANKKNFAPGETPAAIANSSGQPYQPLREVLPGNRRGGQGYRPQGQKSNDPMNQGRHDSMGRYRNSSWYSSGSRYQSAPSQAPGNTIERGQTHSAGTNGTGVSMEPSPPTPSFKKGLPQRKPRTSQTEAVNS.

Over residues 85–96 (GKKKNKKKKNKP) the composition is skewed to basic residues. The disordered stretch occupies residues 85-137 (GKKKNKKKKNKPKPAAEPSNGIPDSSKSVSIQEEQSAPSSEKGGMNGYHVNGA). Polar residues predominate over residues 106-123 (IPDSSKSVSIQEEQSAPS). Residues serine 143, serine 146, and serine 148 each carry the phosphoserine modification. 2 disordered regions span residues 197 to 216 (HNSQ…TTET) and 369 to 545 (GQVS…AVNS). Residues 369–378 (GQVSHPKNSY) are compositionally biased toward polar residues. Low complexity-rich tracts occupy residues 379 to 415 (STRS…LTSA) and 475 to 490 (RYRN…RYQS). Polar residues predominate over residues 491-514 (APSQAPGNTIERGQTHSAGTNGTG). At serine 520 the chain carries Phosphoserine.

This sequence belongs to the SPATS2 family.

It localises to the cytoplasm. In Homo sapiens (Human), this protein is Spermatogenesis-associated serine-rich protein 2 (SPATS2).